The primary structure comprises 371 residues: 2-aminoethylphosphonate--pyruvate transaminase (371 aa).

At Lys195 the chain carries N6-(pyridoxal phosphate)lysine.

The protein belongs to the class-V pyridoxal-phosphate-dependent aminotransferase family. PhnW subfamily. In terms of assembly, homodimer. Requires pyridoxal 5'-phosphate as cofactor.

It catalyses the reaction (2-aminoethyl)phosphonate + pyruvate = phosphonoacetaldehyde + L-alanine. Involved in phosphonate degradation. The sequence is that of 2-aminoethylphosphonate--pyruvate transaminase from Pseudomonas aeruginosa (strain UCBPP-PA14).